We begin with the raw amino-acid sequence, 418 residues long: Glutamyl-tRNA(Gln) amidotransferase subunit D (418 aa).

In terms of domain architecture, Asparaginase/glutaminase spans 74-405 (KNISILSTGG…EDAKELMSKD (332 aa)). Residues T84, T160, D161, and K237 contribute to the active site.

It belongs to the asparaginase 1 family. GatD subfamily. In terms of assembly, heterodimer of GatD and GatE.

The catalysed reaction is L-glutamyl-tRNA(Gln) + L-glutamine + ATP + H2O = L-glutaminyl-tRNA(Gln) + L-glutamate + ADP + phosphate + H(+). In terms of biological role, allows the formation of correctly charged Gln-tRNA(Gln) through the transamidation of misacylated Glu-tRNA(Gln) in organisms which lack glutaminyl-tRNA synthetase. The reaction takes place in the presence of glutamine and ATP through an activated gamma-phospho-Glu-tRNA(Gln). The GatDE system is specific for glutamate and does not act on aspartate. This is Glutamyl-tRNA(Gln) amidotransferase subunit D from Methanococcus maripaludis (strain C7 / ATCC BAA-1331).